We begin with the raw amino-acid sequence, 100 residues long: Large ribosomal subunit protein eL30 (100 aa).

Belongs to the eukaryotic ribosomal protein eL30 family.

This Methanococcus maripaludis (strain DSM 14266 / JCM 13030 / NBRC 101832 / S2 / LL) protein is Large ribosomal subunit protein eL30.